The chain runs to 181 residues: MSSAIASRRYALALLEVAIEANFLDTVTEDLLKIQEVLSGSRELLLALRSPLINVDLKSRILEEIFGKEVGEKTMIFIKLLAHKKRANLLPTVITEFSSLLDERNGVINADVKSAVKLSDEQAKELVNGLSIRTGKKIRAKMSLDEKLIGGVTVKIGDTILDGSIQHQLQLLKSSLIAEPA.

The protein belongs to the ATPase delta chain family. F-type ATPases have 2 components, F(1) - the catalytic core - and F(0) - the membrane proton channel. F(1) has five subunits: alpha(3), beta(3), gamma(1), delta(1), epsilon(1). F(0) has three main subunits: a(1), b(2) and c(10-14). The alpha and beta chains form an alternating ring which encloses part of the gamma chain. F(1) is attached to F(0) by a central stalk formed by the gamma and epsilon chains, while a peripheral stalk is formed by the delta and b chains.

Its subcellular location is the cell inner membrane. F(1)F(0) ATP synthase produces ATP from ADP in the presence of a proton or sodium gradient. F-type ATPases consist of two structural domains, F(1) containing the extramembraneous catalytic core and F(0) containing the membrane proton channel, linked together by a central stalk and a peripheral stalk. During catalysis, ATP synthesis in the catalytic domain of F(1) is coupled via a rotary mechanism of the central stalk subunits to proton translocation. Functionally, this protein is part of the stalk that links CF(0) to CF(1). It either transmits conformational changes from CF(0) to CF(1) or is implicated in proton conduction. This is ATP synthase subunit delta from Chlorobaculum parvum (strain DSM 263 / NCIMB 8327) (Chlorobium vibrioforme subsp. thiosulfatophilum).